The chain runs to 668 residues: DNA ligase (668 aa).

NAD(+) is bound by residues 37–41 (DAIYD), 86–87 (SL), and Glu-116. The active-site N6-AMP-lysine intermediate is Lys-118. Positions 139, 176, 289, and 313 each coordinate NAD(+). Zn(2+)-binding residues include Cys-407, Cys-410, Cys-425, and Cys-430. The BRCT domain maps to 586 to 668 (AQSSALAGLT…RALIETREMP (83 aa)).

The protein belongs to the NAD-dependent DNA ligase family. LigA subfamily. Mg(2+) is required as a cofactor. The cofactor is Mn(2+).

The catalysed reaction is NAD(+) + (deoxyribonucleotide)n-3'-hydroxyl + 5'-phospho-(deoxyribonucleotide)m = (deoxyribonucleotide)n+m + AMP + beta-nicotinamide D-nucleotide.. In terms of biological role, DNA ligase that catalyzes the formation of phosphodiester linkages between 5'-phosphoryl and 3'-hydroxyl groups in double-stranded DNA using NAD as a coenzyme and as the energy source for the reaction. It is essential for DNA replication and repair of damaged DNA. This chain is DNA ligase, found in Gloeobacter violaceus (strain ATCC 29082 / PCC 7421).